The following is a 159-amino-acid chain: V-type proton ATPase 16 kDa proteolipid subunit c (159 aa).

Residues 1–12 (MSSEVSSDNPIY) are Lumenal-facing. Residues 13-35 (GPFFGVMGAASAIIFSALGAAYG) form a helical membrane-spanning segment. Residues 36 to 57 (TAKSGTGIAAMSVMRPELIMKS) lie on the Cytoplasmic side of the membrane. Residues 58 to 78 (IIPVVMAGIIAIYGLVVAVLI) form a helical membrane-spanning segment. Topologically, residues 79–96 (AGALEEPSKYSLYRGFIH) are lumenal. A helical membrane pass occupies residues 97–118 (LGAGLAVGFSGLAAGFAIGIVG). Residues 119-130 (DAGVRGTAQQPR) lie on the Cytoplasmic side of the membrane. The helical transmembrane segment at 131 to 156 (LFVGMILILIFAEVLGLYGLIVAIYL) threads the bilayer. Residues 157 to 159 (YTK) are Lumenal-facing.

It belongs to the V-ATPase proteolipid subunit family. In terms of assembly, V-ATPase is a heteromultimeric enzyme made up of two complexes: the ATP-hydrolytic V1 complex and the proton translocation V0 complex. The V1 complex consists of three catalytic AB heterodimers that form a heterohexamer, three peripheral stalks each consisting of EG heterodimers, one central rotor including subunits D and F, and the regulatory subunits C and H. The proton translocation complex V0 consists of the proton transport subunit a, a ring of proteolipid subunits c9c'', rotary subunit d, subunits e and f, and the accessory subunits VhaAC45 and ATP6AP2. Expressed in the larval middle mid-gut; predominantly in the copper cell region with lower levels of expression in the interstitial cells.

The protein resides in the membrane. Functionally, proton-conducting pore forming subunit of the V0 complex of vacuolar(H+)-ATPase (V-ATPase), a multisubunit enzyme composed of a peripheral complex (V1) that hydrolyzes ATP and a membrane integral complex (V0) that translocates protons. V-ATPase is responsible for acidifying and maintaining the pH of intracellular compartments and in some cell types, is targeted to the plasma membrane, where it is responsible for acidifying the extracellular environment. In enterocytes, acts as part of a pHCl-2 sensory pathway which mediates Tor-dependent larval growth and metabolism in response to zinc availability. Likely acts in maintaining enterocyte lysosomal acidification which consequently promotes Tor activation at the lysosome membrane. In Drosophila melanogaster (Fruit fly), this protein is V-type proton ATPase 16 kDa proteolipid subunit c (Vha16-1).